We begin with the raw amino-acid sequence, 572 residues long: Probable lysosomal cobalamin transporter (572 aa).

The next 9 helical transmembrane spans lie at 8-28 (VIWFAYLIVIFVLIVVASVFI), 40-60 (FVTFICVFSIAALLATVMLLP), 95-115 (IIYYSLYFLDALLCFVGIPFA), 145-165 (TLTFIAVVIALVLVGFFAPMM), 188-208 (AFTFLLGFVTIIGSCLYAFYT), 314-334 (GGFCLFLVGLSTWISLLMTVV), 374-394 (IIFALIVFFFFWGSVVGVVAV), 421-441 (AVLTLITLGLNYSIVMMLVPG), and 499-519 (VALNFPLFGALLLWAHFLFLA). A disordered region spans residues 522–544 (GRRRGRGRESVSKHQKKRQSYMR).

This sequence belongs to the LIMR family. LMBRD1 subfamily.

Its subcellular location is the lysosome membrane. Probable lysosomal cobalamin transporter. Required to export cobalamin from lysosomes allowing its conversion to cofactors. The polypeptide is Probable lysosomal cobalamin transporter (Aspergillus fumigatus (strain ATCC MYA-4609 / CBS 101355 / FGSC A1100 / Af293) (Neosartorya fumigata)).